Here is a 534-residue protein sequence, read N- to C-terminus: CTP synthase (534 aa).

An amidoligase domain region spans residues 1-267 (MTKYIFVTGG…DQIVCDHLKL (267 aa)). S13 is a CTP binding site. S13 contributes to the UTP binding site. Residue 14 to 19 (SIGKGI) coordinates ATP. Residue Y54 participates in L-glutamine binding. D71 contributes to the ATP binding site. Mg(2+) contacts are provided by D71 and E141. CTP contacts are provided by residues 148–150 (DIE), 188–193 (KTKPTQ), and K224. Residues 188-193 (KTKPTQ) and K224 each bind UTP. 240–242 (RDV) contacts ATP. One can recognise a Glutamine amidotransferase type-1 domain in the interval 292–534 (KIALVGKYVE…FVTAAIKNSN (243 aa)). G354 contacts L-glutamine. C381 functions as the Nucleophile; for glutamine hydrolysis in the catalytic mechanism. L-glutamine-binding positions include 382-385 (LGMQ), E405, and R463. Active-site residues include H508 and E510.

Belongs to the CTP synthase family. In terms of assembly, homotetramer.

It catalyses the reaction UTP + L-glutamine + ATP + H2O = CTP + L-glutamate + ADP + phosphate + 2 H(+). The enzyme catalyses L-glutamine + H2O = L-glutamate + NH4(+). It carries out the reaction UTP + NH4(+) + ATP = CTP + ADP + phosphate + 2 H(+). The protein operates within pyrimidine metabolism; CTP biosynthesis via de novo pathway; CTP from UDP: step 2/2. Allosterically activated by GTP, when glutamine is the substrate; GTP has no effect on the reaction when ammonia is the substrate. The allosteric effector GTP functions by stabilizing the protein conformation that binds the tetrahedral intermediate(s) formed during glutamine hydrolysis. Inhibited by the product CTP, via allosteric rather than competitive inhibition. Its function is as follows. Catalyzes the ATP-dependent amination of UTP to CTP with either L-glutamine or ammonia as the source of nitrogen. Regulates intracellular CTP levels through interactions with the four ribonucleotide triphosphates. The polypeptide is CTP synthase (Streptococcus pyogenes serotype M1).